A 98-amino-acid chain; its full sequence is Citrate lyase acyl carrier protein (98 aa).

Ser-14 carries the O-(phosphoribosyl dephospho-coenzyme A)serine modification.

The protein belongs to the CitD family. Oligomer with a subunit composition of (alpha,beta,gamma)6.

The protein resides in the cytoplasm. In terms of biological role, covalent carrier of the coenzyme of citrate lyase. The sequence is that of Citrate lyase acyl carrier protein from Vibrio cholerae serotype O1 (strain ATCC 39541 / Classical Ogawa 395 / O395).